The chain runs to 293 residues: 4-hydroxy-tetrahydrodipicolinate synthase (293 aa).

Thr-47 lines the pyruvate pocket. Catalysis depends on Tyr-135, which acts as the Proton donor/acceptor. Lys-163 acts as the Schiff-base intermediate with substrate in catalysis. Ile-204 serves as a coordination point for pyruvate.

This sequence belongs to the DapA family. Homotetramer; dimer of dimers.

Its subcellular location is the cytoplasm. It carries out the reaction L-aspartate 4-semialdehyde + pyruvate = (2S,4S)-4-hydroxy-2,3,4,5-tetrahydrodipicolinate + H2O + H(+). It participates in amino-acid biosynthesis; L-lysine biosynthesis via DAP pathway; (S)-tetrahydrodipicolinate from L-aspartate: step 3/4. Catalyzes the condensation of (S)-aspartate-beta-semialdehyde [(S)-ASA] and pyruvate to 4-hydroxy-tetrahydrodipicolinate (HTPA). This is 4-hydroxy-tetrahydrodipicolinate synthase from Brachyspira hyodysenteriae (strain ATCC 49526 / WA1).